The chain runs to 431 residues: UDP-N-acetylglucosamine 1-carboxyvinyltransferase (431 aa).

22 to 23 lines the phosphoenolpyruvate pocket; sequence KN. Arg102 contributes to the UDP-N-acetyl-alpha-D-glucosamine binding site. Cys126 serves as the catalytic Proton donor. The residue at position 126 (Cys126) is a 2-(S-cysteinyl)pyruvic acid O-phosphothioketal. Asp318 and Ile340 together coordinate UDP-N-acetyl-alpha-D-glucosamine.

It belongs to the EPSP synthase family. MurA subfamily.

The protein resides in the cytoplasm. It carries out the reaction phosphoenolpyruvate + UDP-N-acetyl-alpha-D-glucosamine = UDP-N-acetyl-3-O-(1-carboxyvinyl)-alpha-D-glucosamine + phosphate. It functions in the pathway cell wall biogenesis; peptidoglycan biosynthesis. Cell wall formation. Adds enolpyruvyl to UDP-N-acetylglucosamine. This Bartonella quintana (strain Toulouse) (Rochalimaea quintana) protein is UDP-N-acetylglucosamine 1-carboxyvinyltransferase.